We begin with the raw amino-acid sequence, 285 residues long: Inositol oxygenase (285 aa).

Arg29 lines the substrate pocket. The residue at position 33 (Ser33) is a Phosphoserine. Asp85–Asp88 contacts substrate. Residues His98, His123, and Asp124 each coordinate Fe cation. Substrate contacts are provided by residues Lys127 and Gly141–Asp142. Fe cation contacts are provided by His194, His220, and Asp253. His220 to Ser221 serves as a coordination point for substrate.

The protein belongs to the myo-inositol oxygenase family. Requires Fe cation as cofactor. Kidney specific. Renal proximal tubules.

It localises to the cytoplasm. It catalyses the reaction myo-inositol + O2 = D-glucuronate + H2O + H(+). The protein operates within polyol metabolism; myo-inositol degradation into D-glucuronate; D-glucuronate from myo-inositol: step 1/1. In Mus musculus (Mouse), this protein is Inositol oxygenase (Miox).